A 379-amino-acid chain; its full sequence is Sulfate adenylyltransferase (379 aa).

This sequence belongs to the sulfate adenylyltransferase family.

The catalysed reaction is sulfate + ATP + H(+) = adenosine 5'-phosphosulfate + diphosphate. It participates in sulfur metabolism; hydrogen sulfide biosynthesis; sulfite from sulfate: step 1/3. This chain is Sulfate adenylyltransferase, found in Cenarchaeum symbiosum (strain A).